The chain runs to 204 residues: Large ribosomal subunit protein uL4 (204 aa).

Positions 49-75 are disordered; the sequence is TKGRSEVSGGGKKPWRQKGRGGARAGS.

This sequence belongs to the universal ribosomal protein uL4 family. Part of the 50S ribosomal subunit.

Its function is as follows. One of the primary rRNA binding proteins, this protein initially binds near the 5'-end of the 23S rRNA. It is important during the early stages of 50S assembly. It makes multiple contacts with different domains of the 23S rRNA in the assembled 50S subunit and ribosome. Functionally, forms part of the polypeptide exit tunnel. This is Large ribosomal subunit protein uL4 from Campylobacter hominis (strain ATCC BAA-381 / DSM 21671 / CCUG 45161 / LMG 19568 / NCTC 13146 / CH001A).